The chain runs to 188 residues: PRA1 family protein 3 (188 aa).

The residue at position 1 (Met-1) is an N-acetylmethionine. Residues 1-35 (MDVNIAPLRAWDDFFPGSDRFARPDFRDISKWNNR) lie on the Cytoplasmic side of the membrane. A run of 2 helical transmembrane segments spans residues 36 to 56 (VVSN…MMIS) and 57 to 77 (IVGF…VLVF). Topologically, residues 78–93 (TGFVWAAHNKDVLRRM) are cytoplasmic. Transmembrane regions (helical) follow at residues 94-114 (KKRY…FLIS) and 115-135 (MFGG…LMFI). The tract at residues 103-117 (MVVMLASYFLISMFG) is required for homodimer formation and heterodimer formation with ARL6IP1. Residues 136-188 (HASLRLRNLKNKLENKMEGIGLKRTPMGIVLDALEQQEEGINRLTDYISKVKE) are Cytoplasmic-facing. A targeting to endoplasmic reticulum membrane region spans residues 136 to 188 (HASLRLRNLKNKLENKMEGIGLKRTPMGIVLDALEQQEEGINRLTDYISKVKE).

The protein belongs to the PRA1 family. Homodimer. Heterodimer with ARL6IP1. Forms multimers. Interacts with ARL6. Interacts with prenylated RAB1A and RAB3A. Interacts with SLC1A1/EAAC1. Interacts with RTN2 (via first transmembrane domain). Does not interact with VAMP1, VAMP2 or VAMP3.

It is found in the endoplasmic reticulum membrane. It localises to the cell membrane. The protein resides in the cytoplasm. The protein localises to the cytoskeleton. Regulates intracellular concentrations of taurine and glutamate. Negatively modulates SLC1A1/EAAC1 glutamate transport activity by decreasing its affinity for glutamate in a PKC activity-dependent manner. Plays a role in the retention of SLC1A1/EAAC1 in the endoplasmic reticulum. This Homo sapiens (Human) protein is PRA1 family protein 3 (ARL6IP5).